We begin with the raw amino-acid sequence, 366 residues long: Phosphoserine aminotransferase (366 aa).

Residue Arg-42 coordinates L-glutamate. Residues 76-77, Trp-101, Thr-156, Asp-178, and Gln-201 each bind pyridoxal 5'-phosphate; that span reads AT. Lys-202 carries the N6-(pyridoxal phosphate)lysine modification. Residue 243–244 coordinates pyridoxal 5'-phosphate; that stretch reads NT.

The protein belongs to the class-V pyridoxal-phosphate-dependent aminotransferase family. SerC subfamily. As to quaternary structure, homodimer. Pyridoxal 5'-phosphate is required as a cofactor.

It is found in the cytoplasm. The enzyme catalyses O-phospho-L-serine + 2-oxoglutarate = 3-phosphooxypyruvate + L-glutamate. It catalyses the reaction 4-(phosphooxy)-L-threonine + 2-oxoglutarate = (R)-3-hydroxy-2-oxo-4-phosphooxybutanoate + L-glutamate. Its pathway is amino-acid biosynthesis; L-serine biosynthesis; L-serine from 3-phospho-D-glycerate: step 2/3. It participates in cofactor biosynthesis; pyridoxine 5'-phosphate biosynthesis; pyridoxine 5'-phosphate from D-erythrose 4-phosphate: step 3/5. In terms of biological role, catalyzes the reversible conversion of 3-phosphohydroxypyruvate to phosphoserine and of 3-hydroxy-2-oxo-4-phosphonooxybutanoate to phosphohydroxythreonine. This chain is Phosphoserine aminotransferase, found in Aromatoleum aromaticum (strain DSM 19018 / LMG 30748 / EbN1) (Azoarcus sp. (strain EbN1)).